Consider the following 97-residue polypeptide: Large ribosomal subunit protein uL23 (97 aa).

Belongs to the universal ribosomal protein uL23 family. As to quaternary structure, part of the 50S ribosomal subunit. Contacts protein L29, and trigger factor when it is bound to the ribosome.

Its function is as follows. One of the early assembly proteins it binds 23S rRNA. One of the proteins that surrounds the polypeptide exit tunnel on the outside of the ribosome. Forms the main docking site for trigger factor binding to the ribosome. The protein is Large ribosomal subunit protein uL23 of Marinobacter nauticus (strain ATCC 700491 / DSM 11845 / VT8) (Marinobacter aquaeolei).